Consider the following 202-residue polypeptide: Ribonuclease HII (202 aa).

The RNase H type-2 domain maps to Gly18 to Met202. A divalent metal cation contacts are provided by Asp24, Glu25, and Asp116.

The protein belongs to the RNase HII family. Mn(2+) is required as a cofactor. Requires Mg(2+) as cofactor.

The protein resides in the cytoplasm. It catalyses the reaction Endonucleolytic cleavage to 5'-phosphomonoester.. Functionally, endonuclease that specifically degrades the RNA of RNA-DNA hybrids. The protein is Ribonuclease HII of Shewanella piezotolerans (strain WP3 / JCM 13877).